A 94-amino-acid chain; its full sequence is Small ribosomal subunit protein uS17 (94 aa).

The protein belongs to the universal ribosomal protein uS17 family. As to quaternary structure, part of the 30S ribosomal subunit.

Functionally, one of the primary rRNA binding proteins, it binds specifically to the 5'-end of 16S ribosomal RNA. The chain is Small ribosomal subunit protein uS17 from Streptomyces avermitilis (strain ATCC 31267 / DSM 46492 / JCM 5070 / NBRC 14893 / NCIMB 12804 / NRRL 8165 / MA-4680).